A 362-amino-acid chain; its full sequence is Peptide chain release factor 1 (362 aa).

At Gln237 the chain carries N5-methylglutamine.

This sequence belongs to the prokaryotic/mitochondrial release factor family. In terms of processing, methylated by PrmC. Methylation increases the termination efficiency of RF1.

It is found in the cytoplasm. In terms of biological role, peptide chain release factor 1 directs the termination of translation in response to the peptide chain termination codons UAG and UAA. The protein is Peptide chain release factor 1 of Aliivibrio salmonicida (strain LFI1238) (Vibrio salmonicida (strain LFI1238)).